We begin with the raw amino-acid sequence, 254 residues long: D-aminoacyl-tRNA deacylase (254 aa).

The interval 61-83 is disordered; sequence KPTLTVHTPGNLTEDNSHGGNPE. Residues 65–74 are compositionally biased toward polar residues; the sequence is TVHTPGNLTE.

It belongs to the DtdA deacylase family. In terms of assembly, monomer. It depends on Zn(2+) as a cofactor.

The enzyme catalyses a D-aminoacyl-tRNA + H2O = a tRNA + a D-alpha-amino acid + H(+). It catalyses the reaction glycyl-tRNA(Ala) + H2O = tRNA(Ala) + glycine + H(+). In terms of biological role, D-aminoacyl-tRNA deacylase with broad substrate specificity. By recycling D-aminoacyl-tRNA to D-amino acids and free tRNA molecules, this enzyme counteracts the toxicity associated with the formation of D-aminoacyl-tRNA entities in vivo. The sequence is that of D-aminoacyl-tRNA deacylase from Methanococcus maripaludis (strain C7 / ATCC BAA-1331).